A 175-amino-acid chain; its full sequence is Snake venom metalloproteinase BpMP-1 (175 aa).

One can recognise a Peptidase M12B domain in the interval 1-175 (YIELAVVADH…KHNPQCILNK (175 aa)). Positions 3 and 74 each coordinate Ca(2+). Disulfide bonds link cysteine 98-cysteine 171, cysteine 131-cysteine 155, and cysteine 133-cysteine 138. Histidine 117 provides a ligand contact to Zn(2+). Glutamate 118 is an active-site residue. Positions 121 and 127 each coordinate Zn(2+). The Ca(2+) site is built by cysteine 171 and asparagine 174.

It belongs to the venom metalloproteinase (M12B) family. P-I subfamily. As to quaternary structure, monomer. It depends on Zn(2+) as a cofactor. As to expression, expressed by the venom gland.

Its subcellular location is the secreted. With respect to regulation, inhibited by EDTA, 1,10-phenanthroline and beta-mercaptoethanol. Not inhibited by the serine protease inhibitors aprotinin and benzamidin. Functionally, non-hemorrhagic snake venom zinc metalloprotease that hydrolyzes the Aalpha-chain of fibrinogen, more slowly the Bbeta-chain and shows no effect on the gamma chain. Has no coagulant activity on bovine plasma and fibrinogen. This Bothrops pauloensis (Neuwied's lancehead) protein is Snake venom metalloproteinase BpMP-1.